The primary structure comprises 138 residues: Transcription antitermination protein NusB (138 aa).

This sequence belongs to the NusB family.

In terms of biological role, involved in transcription antitermination. Required for transcription of ribosomal RNA (rRNA) genes. Binds specifically to the boxA antiterminator sequence of the ribosomal RNA (rrn) operons. In Tolumonas auensis (strain DSM 9187 / NBRC 110442 / TA 4), this protein is Transcription antitermination protein NusB.